Consider the following 584-residue polypeptide: Aspartate--tRNA ligase (584 aa).

E169 serves as a coordination point for L-aspartate. The aspartate stretch occupies residues 193–196; that stretch reads QLFK. R215 contacts L-aspartate. ATP contacts are provided by residues 215–217 and Q224; that span reads RDE. H446 is an L-aspartate binding site. E480 contributes to the ATP binding site. R487 contacts L-aspartate. Residue 532 to 535 coordinates ATP; sequence GLDR.

Belongs to the class-II aminoacyl-tRNA synthetase family. Type 1 subfamily. As to quaternary structure, homodimer.

Its subcellular location is the cytoplasm. It carries out the reaction tRNA(Asp) + L-aspartate + ATP = L-aspartyl-tRNA(Asp) + AMP + diphosphate. Its function is as follows. Catalyzes the attachment of L-aspartate to tRNA(Asp) in a two-step reaction: L-aspartate is first activated by ATP to form Asp-AMP and then transferred to the acceptor end of tRNA(Asp). The polypeptide is Aspartate--tRNA ligase (Buchnera aphidicola subsp. Schizaphis graminum (strain Sg)).